We begin with the raw amino-acid sequence, 465 residues long: Methylenetetrahydrofolate--tRNA-(uracil-5-)-methyltransferase TrmFO (465 aa).

3-8 (GAGLAG) provides a ligand contact to FAD.

This sequence belongs to the MnmG family. TrmFO subfamily. The cofactor is FAD.

Its subcellular location is the cytoplasm. The catalysed reaction is uridine(54) in tRNA + (6R)-5,10-methylene-5,6,7,8-tetrahydrofolate + NADH + H(+) = 5-methyluridine(54) in tRNA + (6S)-5,6,7,8-tetrahydrofolate + NAD(+). It catalyses the reaction uridine(54) in tRNA + (6R)-5,10-methylene-5,6,7,8-tetrahydrofolate + NADPH + H(+) = 5-methyluridine(54) in tRNA + (6S)-5,6,7,8-tetrahydrofolate + NADP(+). In terms of biological role, catalyzes the folate-dependent formation of 5-methyl-uridine at position 54 (M-5-U54) in all tRNAs. The polypeptide is Methylenetetrahydrofolate--tRNA-(uracil-5-)-methyltransferase TrmFO (Bradyrhizobium sp. (strain ORS 278)).